The primary structure comprises 449 residues: Aspartate aminotransferase 3, chloroplastic (449 aa).

The N-terminal 43 residues, 1–43, are a transit peptide targeting the chloroplast; the sequence is MKTTHFSSSSSSDRRIGALLRHLNSGSDSDNLSSLYASPTSGG. L-aspartate contacts are provided by Gly81, Trp178, and Asn231. An N6-(pyridoxal phosphate)lysine modification is found at Lys295. Arg423 serves as a coordination point for L-aspartate.

This sequence belongs to the class-I pyridoxal-phosphate-dependent aminotransferase family. As to quaternary structure, homodimer. It depends on pyridoxal 5'-phosphate as a cofactor. In terms of tissue distribution, expressed in roots, cauline leaves, flowers, hypocotyl epidermis and root hair cells.

The protein localises to the plastid. It is found in the chloroplast. It catalyses the reaction L-aspartate + 2-oxoglutarate = oxaloacetate + L-glutamate. Amino acid aminotransferase important for the metabolism of amino acids and Krebs-cycle related organic acids. No activity with D-Asp or D-Ala as amino donors. In plants, it is involved in nitrogen metabolism and in aspects of carbon and energy metabolism. The protein is Aspartate aminotransferase 3, chloroplastic (ASP3) of Arabidopsis thaliana (Mouse-ear cress).